A 526-amino-acid chain; its full sequence is Amine oxidase [flavin-containing] A (526 aa).

Position 1 is an N-acetylmethionine (Met-1). Residues 1-497 (MTDLEKPNLA…HTFLERNLPS (497 aa)) lie on the Cytoplasmic side of the membrane. Ser-383 carries the phosphoserine modification. The residue at position 406 (Cys-406) is an S-8alpha-FAD cysteine. A helical; Anchor for type IV membrane protein membrane pass occupies residues 498-518 (VPGLLKITGVSTSVALLCFVL). Over 519 to 526 (YKIKKLPC) the chain is Mitochondrial intermembrane. An interaction with membrane phospholipid headgroups region spans residues 520–522 (KIK).

Belongs to the flavin monoamine oxidase family. In terms of assembly, monomer, homo- or heterodimer (containing two subunits of similar size). Each subunit contains a covalently bound flavin. Enzymatically active as monomer. FAD serves as cofactor.

It is found in the mitochondrion outer membrane. It carries out the reaction a secondary aliphatic amine + O2 + H2O = a primary amine + an aldehyde + H2O2. It catalyses the reaction a primary methyl amine + O2 + H2O = an aldehyde + H2O2 + NH4(+). The catalysed reaction is (R)-adrenaline + O2 + H2O = (R)-3,4-dihydroxymandelaldehyde + methylamine + H2O2. The enzyme catalyses dopamine + O2 + H2O = 3,4-dihydroxyphenylacetaldehyde + H2O2 + NH4(+). It carries out the reaction tyramine + O2 + H2O = (4-hydroxyphenyl)acetaldehyde + H2O2 + NH4(+). It catalyses the reaction (R)-noradrenaline + O2 + H2O = (R)-3,4-dihydroxymandelaldehyde + H2O2 + NH4(+). The catalysed reaction is serotonin + O2 + H2O = (5-hydroxyindol-3-yl)acetaldehyde + H2O2 + NH4(+). The enzyme catalyses kynuramine + O2 + H2O = 3-(2-aminophenyl)-3-oxopropanal + H2O2 + NH4(+). It carries out the reaction tryptamine + O2 + H2O = indole-3-acetaldehyde + H2O2 + NH4(+). It catalyses the reaction 2-phenylethylamine + O2 + H2O = 2-phenylacetaldehyde + H2O2 + NH4(+). Its function is as follows. Catalyzes the oxidative deamination of primary and some secondary amine such as neurotransmitters, with concomitant reduction of oxygen to hydrogen peroxide and has important functions in the metabolism of neuroactive and vasoactive amines in the central nervous system and peripheral tissues. Preferentially oxidizes serotonin. Also catalyzes the oxidative deamination of kynuramine to 3-(2-aminophenyl)-3-oxopropanal that can spontaneously condense to 4-hydroxyquinoline. The sequence is that of Amine oxidase [flavin-containing] A from Rattus norvegicus (Rat).